A 392-amino-acid polypeptide reads, in one-letter code: Pyruvate synthase subunit PorA (392 aa).

Heterotetramer of one alpha, one beta, one delta and one gamma chain.

It carries out the reaction 2 oxidized [2Fe-2S]-[ferredoxin] + pyruvate + CoA = 2 reduced [2Fe-2S]-[ferredoxin] + acetyl-CoA + CO2 + H(+). This is Pyruvate synthase subunit PorA (porA) from Thermotoga maritima (strain ATCC 43589 / DSM 3109 / JCM 10099 / NBRC 100826 / MSB8).